We begin with the raw amino-acid sequence, 495 residues long: Amorpha-4,11-diene 12-monooxygenase (495 aa).

The Cytoplasmic segment spans residues 1-6 (MKSILK). The helical; Signal-anchor for type II membrane protein transmembrane segment at 7–29 (AMALSLTTSIALATILLFVYKFA) threads the bilayer. The Lumenal segment spans residues 30 to 495 (TRSKSTKKSL…KTELLLVPSF (466 aa)). N-linked (GlcNAc...) asparagine glycosylation is found at Asn-176, Asn-261, Asn-267, Asn-386, and Asn-417. Cys-439 serves as a coordination point for heme.

Belongs to the cytochrome P450 family. Heme is required as a cofactor. In terms of tissue distribution, highly expressed both in apical and sub-apical cells of glandular secretory trichomes. Detected in flower buds, leaves and roots. Also present in non-glandular trichome cells.

The protein localises to the endoplasmic reticulum membrane. It catalyses the reaction (+)-amorpha-4,11-diene + 3 reduced [NADPH--hemoprotein reductase] + 3 O2 = (+)-artemisinate + 3 oxidized [NADPH--hemoprotein reductase] + 4 H2O + 4 H(+). The protein operates within sesquiterpene biosynthesis. Functionally, involved in the biosynthesis of the antimalarial endoperoxide artemisinin. Catalyzes three consecutive oxidations of amorpha-4,11-diene to produce artemisinic acid, with artemisinic alcohol and artemisinic aldehyde as intermediates products, but is unable to oxidize germacrene A. No activity with limonene, alpha-pinene, beta-pinene, pinocarveol, (-)-alloisolongifolene, caryophyllene, (-)-alpha-gurjunene, (+)-gamma-gurjunene, (+)-ledene, (+)-beta-selinene and (+)-valencene as substrates. This chain is Amorpha-4,11-diene 12-monooxygenase, found in Artemisia annua (Sweet wormwood).